The following is a 175-amino-acid chain: Shikimate kinase (175 aa).

Residue 14 to 19 (GAGKST) participates in ATP binding. Residue serine 18 participates in Mg(2+) binding. Residues aspartate 36, arginine 60, and glycine 82 each contribute to the substrate site. Arginine 120 contacts ATP. Arginine 140 contacts substrate. Glutamine 157 serves as a coordination point for ATP.

This sequence belongs to the shikimate kinase family. In terms of assembly, monomer. Requires Mg(2+) as cofactor.

It localises to the cytoplasm. The enzyme catalyses shikimate + ATP = 3-phosphoshikimate + ADP + H(+). The protein operates within metabolic intermediate biosynthesis; chorismate biosynthesis; chorismate from D-erythrose 4-phosphate and phosphoenolpyruvate: step 5/7. Catalyzes the specific phosphorylation of the 3-hydroxyl group of shikimic acid using ATP as a cosubstrate. This is Shikimate kinase from Mannheimia succiniciproducens (strain KCTC 0769BP / MBEL55E).